The sequence spans 86 residues: Anti-adapter protein IraP (86 aa).

Residues 1–36 (MKNLIAELLLKLAQKEEESKELVAQVEALEIIVTAM) adopt a coiled-coil conformation.

The protein belongs to the IraP family. As to quaternary structure, interacts with RssB.

It localises to the cytoplasm. Inhibits RpoS proteolysis by regulating RssB activity, thereby increasing the stability of the sigma stress factor RpoS especially during phosphate and magnesium starvation, but also in stationary phase and during nitrogen starvation. Its effect on RpoS stability is due to its interaction with RssB, which probably blocks the interaction of RssB with RpoS, and the consequent delivery of the RssB-RpoS complex to the ClpXP protein degradation pathway. This is Anti-adapter protein IraP from Salmonella choleraesuis (strain SC-B67).